Consider the following 1129-residue polypeptide: Phytochrome A (1129 aa).

Residues 217–399 (SMERLCDTMV…VFAIHVSKEL (183 aa)) form the GAF domain. Cysteine 322 provides a ligand contact to phytochromobilin. 2 PAS domains span residues 622–692 (VTSE…LQGK) and 755–826 (DYKA…VNLG). In terms of domain architecture, Histidine kinase spans 906–1123 (YLRRQAKNPL…TFIITVELAA (218 aa)).

It belongs to the phytochrome family. In terms of assembly, homodimer. In terms of processing, contains one covalently linked phytochromobilin chromophore.

Functionally, regulatory photoreceptor which exists in two forms that are reversibly interconvertible by light: the Pr form that absorbs maximally in the red region of the spectrum and the Pfr form that absorbs maximally in the far-red region. Photoconversion of Pr to Pfr induces an array of morphogenic responses, whereas reconversion of Pfr to Pr cancels the induction of those responses. Pfr controls the expression of a number of nuclear genes including those encoding the small subunit of ribulose-bisphosphate carboxylase, chlorophyll A/B binding protein, protochlorophyllide reductase, rRNA, etc. It also controls the expression of its own gene(s) in a negative feedback fashion. The sequence is that of Phytochrome A (PHYA) from Petroselinum crispum (Parsley).